A 223-amino-acid chain; its full sequence is Small ribosomal subunit protein uS3 (223 aa).

One can recognise a KH type-2 domain in the interval 40 to 108 (IRELVHRELP…KVHLNIQEIR (69 aa)).

The protein belongs to the universal ribosomal protein uS3 family. In terms of assembly, part of the 30S ribosomal subunit. Forms a tight complex with proteins S10 and S14.

Functionally, binds the lower part of the 30S subunit head. Binds mRNA in the 70S ribosome, positioning it for translation. This chain is Small ribosomal subunit protein uS3, found in Thermomicrobium roseum (strain ATCC 27502 / DSM 5159 / P-2).